Reading from the N-terminus, the 389-residue chain is Alkanesulfonate monooxygenase (389 aa).

It belongs to the SsuD family.

The catalysed reaction is an alkanesulfonate + FMNH2 + O2 = an aldehyde + FMN + sulfite + H2O + 2 H(+). Its function is as follows. Catalyzes the desulfonation of aliphatic sulfonates. The protein is Alkanesulfonate monooxygenase of Variovorax paradoxus (strain S110).